The primary structure comprises 205 residues: Small ribosomal subunit protein uS4 (205 aa).

Residues 1–16 are compositionally biased toward basic and acidic residues; it reads MSKRESSKYKIDRRMG. Positions 1–46 are disordered; the sequence is MSKRESSKYKIDRRMGENIWGRPKSPVNRREYGPGQHGQRRKGKLS. In terms of domain architecture, S4 RNA-binding spans 94–157; the sequence is SRLDAIVYRA…KQLVIVLEAV (64 aa).

Belongs to the universal ribosomal protein uS4 family. In terms of assembly, part of the 30S ribosomal subunit. Contacts protein S5. The interaction surface between S4 and S5 is involved in control of translational fidelity.

Its function is as follows. One of the primary rRNA binding proteins, it binds directly to 16S rRNA where it nucleates assembly of the body of the 30S subunit. Functionally, with S5 and S12 plays an important role in translational accuracy. In Rhizobium johnstonii (strain DSM 114642 / LMG 32736 / 3841) (Rhizobium leguminosarum bv. viciae), this protein is Small ribosomal subunit protein uS4.